A 142-amino-acid polypeptide reads, in one-letter code: Small ribosomal subunit protein uS11c (142 aa).

Belongs to the universal ribosomal protein uS11 family. Part of the 30S ribosomal subunit.

The protein resides in the plastid. The protein localises to the chloroplast. The polypeptide is Small ribosomal subunit protein uS11c (Welwitschia mirabilis (Tree tumbo)).